The sequence spans 282 residues: Protease HtpX homolog (282 aa).

2 helical membrane passes run 7–26 (TTVLLAALTALIIWIGGAVG) and 30–49 (GMMIAFVLALVMNVGSYWFS). H131 contributes to the Zn(2+) binding site. E132 is an active-site residue. H135 contacts Zn(2+). Helical transmembrane passes span 141 to 161 (ILVSSIAATLAGVVMILARMA) and 183 to 203 (LGLVVTAILAPIAAMLIQLAI). Zn(2+) is bound at residue E208.

Belongs to the peptidase M48B family. Requires Zn(2+) as cofactor.

Its subcellular location is the cell inner membrane. This Syntrophobacter fumaroxidans (strain DSM 10017 / MPOB) protein is Protease HtpX homolog.